The sequence spans 201 residues: ADP-ribosylation factor-related protein 1 (201 aa).

At M1 the chain carries N-acetylmethionine. GTP contacts are provided by residues 24–31, 75–79, and 134–137; these read GLDNAGKT, DLGGQ, and NKQD.

Belongs to the small GTPase superfamily. Arf family. As to quaternary structure, interacts with SYS1.

It localises to the golgi apparatus. Its subcellular location is the trans-Golgi network. In terms of biological role, trans-Golgi-associated GTPase that regulates protein sorting. Controls the targeting of ARL1 and its effector to the trans-Golgi. Required for the lipidation of chylomicrons in the intestine and required for VLDL lipidation in the liver. The protein is ADP-ribosylation factor-related protein 1 (ARFRP1) of Pongo abelii (Sumatran orangutan).